The primary structure comprises 278 residues: Rhomboid protease GlpG (278 aa).

The next 6 membrane-spanning stretches (helical) occupy residues 95 to 115 (GPLT…MQIL), 143 to 163 (AFLH…WYLG), 170 to 190 (LGSG…GWAQ), 192 to 212 (LFSG…MGYC), 224 to 241 (LMLP…LVAG), and 245 to 267 (ILGM…LMAF). Catalysis depends on S202, which acts as the Nucleophile. Residue H255 is part of the active site.

It belongs to the peptidase S54 family.

It is found in the cell inner membrane. It carries out the reaction Cleaves type-1 transmembrane domains using a catalytic dyad composed of serine and histidine that are contributed by different transmembrane domains.. Rhomboid-type serine protease that catalyzes intramembrane proteolysis. The protein is Rhomboid protease GlpG of Serratia proteamaculans (strain 568).